We begin with the raw amino-acid sequence, 134 residues long: Probable glycine cleavage system H protein (134 aa).

Residues 29–110 enclose the Lipoyl-binding domain; the sequence is TVLVGITDYA…PYGAWIAKIK (82 aa). Lys-70 carries the post-translational modification N6-lipoyllysine.

This sequence belongs to the GcvH family. In terms of assembly, the glycine cleavage system is composed of four proteins: P, T, L and H. It depends on (R)-lipoate as a cofactor.

Its function is as follows. The glycine cleavage system catalyzes the degradation of glycine. The H protein shuttles the methylamine group of glycine from the P protein to the T protein. This chain is Probable glycine cleavage system H protein, found in Pyrococcus horikoshii (strain ATCC 700860 / DSM 12428 / JCM 9974 / NBRC 100139 / OT-3).